Here is a 96-residue protein sequence, read N- to C-terminus: UPF0235 protein Sputcn32_2690 (96 aa).

Belongs to the UPF0235 family.

In Shewanella putrefaciens (strain CN-32 / ATCC BAA-453), this protein is UPF0235 protein Sputcn32_2690.